Here is a 1119-residue protein sequence, read N- to C-terminus: Protein translocase subunit SecA (1119 aa).

Residues Q175, 213 to 217, and D714 each bind ATP; that span reads GEGKT. Zn(2+)-binding residues include C1106, C1108, C1117, and C1118.

It belongs to the SecA family. In terms of assembly, monomer and homodimer. Part of the essential Sec protein translocation apparatus which comprises SecA, SecYEG and auxiliary proteins SecDF. Other proteins may also be involved. It depends on Zn(2+) as a cofactor.

The protein resides in the cell inner membrane. Its subcellular location is the cytoplasm. It catalyses the reaction ATP + H2O + cellular proteinSide 1 = ADP + phosphate + cellular proteinSide 2.. Part of the Sec protein translocase complex. Interacts with the SecYEG preprotein conducting channel. Has a central role in coupling the hydrolysis of ATP to the transfer of proteins into and across the cell membrane, serving as an ATP-driven molecular motor driving the stepwise translocation of polypeptide chains across the membrane. The protein is Protein translocase subunit SecA of Azobacteroides pseudotrichonymphae genomovar. CFP2.